A 330-amino-acid chain; its full sequence is Beta-ketoacyl-[acyl-carrier-protein] synthase III (330 aa).

Residues C118 and H257 contribute to the active site. An ACP-binding region spans residues 258–262 (QANLR). The active site involves N287.

It belongs to the thiolase-like superfamily. FabH family. In terms of assembly, homodimer.

Its subcellular location is the cytoplasm. The catalysed reaction is malonyl-[ACP] + acetyl-CoA + H(+) = 3-oxobutanoyl-[ACP] + CO2 + CoA. The protein operates within lipid metabolism; fatty acid biosynthesis. In terms of biological role, catalyzes the condensation reaction of fatty acid synthesis by the addition to an acyl acceptor of two carbons from malonyl-ACP. Catalyzes the first condensation reaction which initiates fatty acid synthesis and may therefore play a role in governing the total rate of fatty acid production. Possesses both acetoacetyl-ACP synthase and acetyl transacylase activities. Its substrate specificity determines the biosynthesis of branched-chain and/or straight-chain of fatty acids. The protein is Beta-ketoacyl-[acyl-carrier-protein] synthase III of Nitratidesulfovibrio vulgaris (strain DSM 19637 / Miyazaki F) (Desulfovibrio vulgaris).